Here is a 201-residue protein sequence, read N- to C-terminus: Dephospho-CoA kinase (201 aa).

The 199-residue stretch at 3–201 (VIGLTGGIAS…WKERIEKNPR (199 aa)) folds into the DPCK domain. 11–16 (ASGKST) lines the ATP pocket.

The protein belongs to the CoaE family.

It localises to the cytoplasm. It catalyses the reaction 3'-dephospho-CoA + ATP = ADP + CoA + H(+). It functions in the pathway cofactor biosynthesis; coenzyme A biosynthesis; CoA from (R)-pantothenate: step 5/5. Catalyzes the phosphorylation of the 3'-hydroxyl group of dephosphocoenzyme A to form coenzyme A. The chain is Dephospho-CoA kinase from Geobacter metallireducens (strain ATCC 53774 / DSM 7210 / GS-15).